The chain runs to 620 residues: 1-deoxy-D-xylulose-5-phosphate synthase (620 aa).

Thiamine diphosphate is bound by residues His80 and 121 to 123 (GHS). Asp152 contributes to the Mg(2+) binding site. Residues 153 to 154 (GA), Asn181, Tyr288, and Glu370 contribute to the thiamine diphosphate site. Asn181 is a binding site for Mg(2+).

This sequence belongs to the transketolase family. DXPS subfamily. Homodimer. Mg(2+) serves as cofactor. It depends on thiamine diphosphate as a cofactor.

It catalyses the reaction D-glyceraldehyde 3-phosphate + pyruvate + H(+) = 1-deoxy-D-xylulose 5-phosphate + CO2. Its pathway is metabolic intermediate biosynthesis; 1-deoxy-D-xylulose 5-phosphate biosynthesis; 1-deoxy-D-xylulose 5-phosphate from D-glyceraldehyde 3-phosphate and pyruvate: step 1/1. Functionally, catalyzes the acyloin condensation reaction between C atoms 2 and 3 of pyruvate and glyceraldehyde 3-phosphate to yield 1-deoxy-D-xylulose-5-phosphate (DXP). In Photobacterium profundum (strain SS9), this protein is 1-deoxy-D-xylulose-5-phosphate synthase.